Reading from the N-terminus, the 176-residue chain is Adenylyl-sulfate kinase (176 aa).

12-19 (GLSGAGKT) is an ATP binding site. S86 functions as the Phosphoserine intermediate in the catalytic mechanism.

Belongs to the APS kinase family.

The catalysed reaction is adenosine 5'-phosphosulfate + ATP = 3'-phosphoadenylyl sulfate + ADP + H(+). The protein operates within sulfur metabolism; hydrogen sulfide biosynthesis; sulfite from sulfate: step 2/3. Catalyzes the synthesis of activated sulfate. This is Adenylyl-sulfate kinase from Synechococcus sp. (strain JA-3-3Ab) (Cyanobacteria bacterium Yellowstone A-Prime).